The primary structure comprises 586 residues: CTP synthase 2 (586 aa).

The Glutamine amidotransferase type-1 domain maps to 300–554; it reads SIALVGKYTK…LAATGTLNTH (255 aa). Catalysis depends on for GATase activity residues cysteine 399, histidine 526, and glutamate 528. A phosphoserine mark is found at serine 568, serine 571, and serine 574.

Belongs to the CTP synthase family.

The catalysed reaction is UTP + L-glutamine + ATP + H2O = CTP + L-glutamate + ADP + phosphate + 2 H(+). It participates in pyrimidine metabolism; CTP biosynthesis via de novo pathway; CTP from UDP: step 2/2. Its function is as follows. Catalyzes the ATP-dependent amination of UTP to CTP with either L-glutamine or ammonia as the source of nitrogen. Constitutes the rate-limiting enzyme in the synthesis of cytosine nucleotides. The chain is CTP synthase 2 (Ctps2) from Rattus norvegicus (Rat).